The chain runs to 431 residues: GTPase Obg (431 aa).

One can recognise an Obg domain in the interval 1–158; sequence MFVDQVKVDV…LTIRMELKVL (158 aa). Residues 159-335 form the OBG-type G domain; sequence ADVGLVGFPS…LLAKTADLLD (177 aa). Residues 165 to 172, 190 to 194, 212 to 215, 282 to 285, and 316 to 318 each bind GTP; these read GFPSVGKS, FTTLV, DLPG, TKMD, and SSI. Mg(2+) contacts are provided by serine 172 and threonine 192. In terms of domain architecture, OCT spans 353–431; it reads YTTEADADFS…ILDYSFQFMD (79 aa).

It belongs to the TRAFAC class OBG-HflX-like GTPase superfamily. OBG GTPase family. As to quaternary structure, monomer. Requires Mg(2+) as cofactor.

The protein resides in the cytoplasm. Its function is as follows. An essential GTPase which binds GTP, GDP and possibly (p)ppGpp with moderate affinity, with high nucleotide exchange rates and a fairly low GTP hydrolysis rate. Plays a role in control of the cell cycle, stress response, ribosome biogenesis and in those bacteria that undergo differentiation, in morphogenesis control. The polypeptide is GTPase Obg (Lactiplantibacillus plantarum (strain ATCC BAA-793 / NCIMB 8826 / WCFS1) (Lactobacillus plantarum)).